The following is a 312-amino-acid chain: Lipoyl synthase (312 aa).

7 residues coordinate [4Fe-4S] cluster: cysteine 37, cysteine 42, cysteine 48, cysteine 67, cysteine 71, cysteine 74, and serine 281. The Radical SAM core domain maps to arginine 52–leucine 270.

This sequence belongs to the radical SAM superfamily. Lipoyl synthase family. [4Fe-4S] cluster serves as cofactor.

It is found in the cytoplasm. It catalyses the reaction [[Fe-S] cluster scaffold protein carrying a second [4Fe-4S](2+) cluster] + N(6)-octanoyl-L-lysyl-[protein] + 2 oxidized [2Fe-2S]-[ferredoxin] + 2 S-adenosyl-L-methionine + 4 H(+) = [[Fe-S] cluster scaffold protein] + N(6)-[(R)-dihydrolipoyl]-L-lysyl-[protein] + 4 Fe(3+) + 2 hydrogen sulfide + 2 5'-deoxyadenosine + 2 L-methionine + 2 reduced [2Fe-2S]-[ferredoxin]. Its pathway is protein modification; protein lipoylation via endogenous pathway; protein N(6)-(lipoyl)lysine from octanoyl-[acyl-carrier-protein]: step 2/2. Catalyzes the radical-mediated insertion of two sulfur atoms into the C-6 and C-8 positions of the octanoyl moiety bound to the lipoyl domains of lipoate-dependent enzymes, thereby converting the octanoylated domains into lipoylated derivatives. The protein is Lipoyl synthase of Halorubrum lacusprofundi (strain ATCC 49239 / DSM 5036 / JCM 8891 / ACAM 34).